An 873-amino-acid polypeptide reads, in one-letter code: Leucine--tRNA ligase (873 aa).

Positions 43–53 (PYPSGSLHMGH) match the 'HIGH' region motif. Positions 624-628 (TMSKS) match the 'KMSKS' region motif. ATP is bound at residue Lys627.

This sequence belongs to the class-I aminoacyl-tRNA synthetase family.

The protein resides in the cytoplasm. The catalysed reaction is tRNA(Leu) + L-leucine + ATP = L-leucyl-tRNA(Leu) + AMP + diphosphate. The chain is Leucine--tRNA ligase from Synechococcus sp. (strain JA-3-3Ab) (Cyanobacteria bacterium Yellowstone A-Prime).